The sequence spans 567 residues: Mitogen-activated protein kinase 16 (567 aa).

In terms of domain architecture, Protein kinase spans Tyr25–Phe316. ATP-binding positions include Ile31 to Val39 and Lys54. Asp151 functions as the Proton acceptor in the catalytic mechanism. Position 187 is a phosphothreonine (Thr187). The short motif at Thr187–Tyr189 is the TXY element. At Tyr189 the chain carries Phosphotyrosine. Thr192 carries the phosphothreonine modification. Disordered stretches follow at residues Ala428–Asn455 and Pro512–Tyr567. Over residues Ser443–Asp453 the composition is skewed to basic and acidic residues. The span at Lys545–Tyr567 shows a compositional bias: polar residues.

The protein belongs to the protein kinase superfamily. CMGC Ser/Thr protein kinase family. MAP kinase subfamily. In terms of processing, dually phosphorylated on Thr-187 and Tyr-189, which activates the enzyme.

It catalyses the reaction L-seryl-[protein] + ATP = O-phospho-L-seryl-[protein] + ADP + H(+). It carries out the reaction L-threonyl-[protein] + ATP = O-phospho-L-threonyl-[protein] + ADP + H(+). With respect to regulation, activated by threonine and tyrosine phosphorylation. This chain is Mitogen-activated protein kinase 16 (MPK16), found in Arabidopsis thaliana (Mouse-ear cress).